Reading from the N-terminus, the 358-residue chain is tRNA pseudouridine synthase B (358 aa).

The interval 1–50 (MTTPDAAIDSKISDSNGADKNKSAADDNAFNAPGRKRHHNNQPRRDKRDV) is disordered. Aspartate 87 acts as the Nucleophile in catalysis.

The protein belongs to the pseudouridine synthase TruB family. Type 1 subfamily.

The catalysed reaction is uridine(55) in tRNA = pseudouridine(55) in tRNA. In terms of biological role, responsible for synthesis of pseudouridine from uracil-55 in the psi GC loop of transfer RNAs. This is tRNA pseudouridine synthase B from Nitrobacter winogradskyi (strain ATCC 25391 / DSM 10237 / CIP 104748 / NCIMB 11846 / Nb-255).